Consider the following 374-residue polypeptide: CMP-N-acetylneuraminate-beta-1,4-galactoside alpha-2,3-sialyltransferase (374 aa).

Residues 1–8 (MGLLVFVR) lie on the Cytoplasmic side of the membrane. A helical; Signal-anchor for type II membrane protein membrane pass occupies residues 9–28 (NLLLALCLFLVLGFLYYSAW). The Lumenal segment spans residues 29–374 (KLHLLQWEDS…RVITDLSSGI (346 aa)). N-linked (GlcNAc...) asparagine glycans are attached at residues asparagine 79 and asparagine 170. Cysteines 159 and 313 form a disulfide.

The protein belongs to the glycosyltransferase 29 family. The soluble form derives from the membrane form by proteolytic processing. As to expression, found in all tissues tested. High expression found in brain, liver, kidney, colon, heart and lung.

The protein localises to the golgi apparatus. Its subcellular location is the golgi stack membrane. It is found in the secreted. The enzyme catalyses a beta-D-galactosyl-(1-&gt;4)-N-acetyl-beta-D-glucosaminyl derivative + CMP-N-acetyl-beta-neuraminate = an N-acetyl-alpha-neuraminyl-(2-&gt;3)-beta-D-galactosyl-(1-&gt;4)-N-acetyl-beta-D-glucosaminyl derivative + CMP + H(+). It participates in protein modification; protein glycosylation. Catalyzes the formation of the NeuAc-alpha-2,3-Gal-beta-1,4-GlcNAc-, NeuAc-alpha-2,3-Gal-beta-1,3-GlcNAc- and NeuAc-alpha-2,3-Gal-beta-1,3-GalNAc- sequences found in terminal carbohydrate groups of glycoproteins and glycolipids. The highest activity is toward Gal-beta-1,3-GlcNAc and the lowest toward Gal-beta-1,3-GalNAc. In Rattus norvegicus (Rat), this protein is CMP-N-acetylneuraminate-beta-1,4-galactoside alpha-2,3-sialyltransferase (St3gal3).